The sequence spans 802 residues: Aldehyde dehydrogenase family 16 member A1 (802 aa).

Residues 513 to 554 are disordered; it reads SLPSGPETGPSPAPPYGLFVRGRFQSPGTQSSRPIKDSSGKV.

It belongs to the aldehyde dehydrogenase family. As to quaternary structure, interacts with SPG21.

This is Aldehyde dehydrogenase family 16 member A1 (Aldh16a1) from Rattus norvegicus (Rat).